Consider the following 208-residue polypeptide: Ciliary-associated calcium-binding coiled-coil protein 1 (208 aa).

As to expression, testis-specific. Expressed in spermatocytes and round spermatids (at protein level).

It is found in the cytoplasm. The protein localises to the cytoskeleton. It localises to the microtubule organizing center. Its subcellular location is the centrosome. The protein resides in the cell projection. It is found in the cilium. The protein localises to the flagellum. Functionally, calcium-binding protein. May be involved in the control of sperm flagellar movement. The protein is Ciliary-associated calcium-binding coiled-coil protein 1 of Mus musculus (Mouse).